The following is a 450-amino-acid chain: tRNA modification GTPase MnmE (450 aa).

Residues arginine 21, glutamate 80, and lysine 119 each coordinate (6S)-5-formyl-5,6,7,8-tetrahydrofolate. In terms of domain architecture, TrmE-type G spans 213-373 (GIKVVIIGKP…LEEEIIKSVK (161 aa)). Asparagine 223 provides a ligand contact to K(+). Residues 223-228 (NVGKST), 242-248 (TDIPGTT), and 267-270 (DTAG) each bind GTP. Serine 227 provides a ligand contact to Mg(2+). Positions 242, 244, and 247 each coordinate K(+). Position 248 (threonine 248) interacts with Mg(2+). Lysine 450 serves as a coordination point for (6S)-5-formyl-5,6,7,8-tetrahydrofolate.

It belongs to the TRAFAC class TrmE-Era-EngA-EngB-Septin-like GTPase superfamily. TrmE GTPase family. As to quaternary structure, homodimer. Heterotetramer of two MnmE and two MnmG subunits. The cofactor is K(+).

It localises to the cytoplasm. Functionally, exhibits a very high intrinsic GTPase hydrolysis rate. Involved in the addition of a carboxymethylaminomethyl (cmnm) group at the wobble position (U34) of certain tRNAs, forming tRNA-cmnm(5)s(2)U34. The polypeptide is tRNA modification GTPase MnmE (Pseudothermotoga lettingae (strain ATCC BAA-301 / DSM 14385 / NBRC 107922 / TMO) (Thermotoga lettingae)).